We begin with the raw amino-acid sequence, 373 residues long: ADP-forming sulfoacetate-CoA ligase subunit SauC (373 aa).

An ATP-grasp domain is found at 9 to 249 (KEAFREKGLP…YLQFNGDIAL (241 aa)). 35 to 97 (FAEVGFPCVL…EEAVDIDREI (63 aa)) contacts ATP. E186 and N188 together coordinate Mg(2+).

This sequence belongs to the succinate/malate CoA ligase beta subunit family. Forms a complex with SauD. It depends on Mg(2+) as a cofactor.

The catalysed reaction is sulfoacetate + ATP + CoA = sulfoacetyl-CoA + ADP + phosphate. In terms of biological role, involved in the degradation of sulfoacetate. Catalyzes the CoA- and ATP-dependent conversion of sulfoacetate to sulfoacetyl-CoA and ADP. Cannot use other sulfonic and carboxylic acids, and shows only residual activity with 3-sulfopropanoate and malonic acid. In Bilophila wadsworthia (strain 3_1_6), this protein is ADP-forming sulfoacetate-CoA ligase subunit SauC.